The sequence spans 335 residues: Phosphate acyltransferase (335 aa).

It belongs to the PlsX family. As to quaternary structure, homodimer. Probably interacts with PlsY.

The protein resides in the cytoplasm. The catalysed reaction is a fatty acyl-[ACP] + phosphate = an acyl phosphate + holo-[ACP]. Its pathway is lipid metabolism; phospholipid metabolism. Functionally, catalyzes the reversible formation of acyl-phosphate (acyl-PO(4)) from acyl-[acyl-carrier-protein] (acyl-ACP). This enzyme utilizes acyl-ACP as fatty acyl donor, but not acyl-CoA. The protein is Phosphate acyltransferase of Streptococcus equi subsp. zooepidemicus (strain MGCS10565).